The chain runs to 415 residues: S-inosyl-L-homocysteine hydrolase (415 aa).

Substrate-binding residues include aspartate 123 and glutamate 148. Position 149–151 (149–151 (TTT)) interacts with NAD(+). Substrate-binding residues include lysine 178 and aspartate 182. NAD(+) is bound by residues asparagine 183, 212 to 217 (GYGWCG), glutamate 235, 291 to 293 (AGH), and asparagine 337.

It belongs to the adenosylhomocysteinase family. In terms of assembly, exists both as a homotetramer and a homodimer, in a 4:1 ratio. The cofactor is NAD(+).

Its subcellular location is the cytoplasm. It carries out the reaction S-inosyl-L-homocysteine + H2O = L-homocysteine + inosine. It participates in amino-acid biosynthesis; S-adenosyl-L-methionine biosynthesis. Catalyzes the hydrolysis of S-inosyl-L-homocysteine (SIH) to L-homocysteine (Hcy) and inosine. Likely functions in a S-adenosyl-L-methionine (SAM) recycling pathway from S-adenosyl-L-homocysteine (SAH) produced from SAM-dependent methylation reactions. Can also catalyze the reverse reaction in vitro, i.e. the synthesis of SIH from Hcy and inosine. Is specific for SIH and inosine as it is unable to either hydrolyze SAH or synthesize SAH from adenosine and Hcy. The protein is S-inosyl-L-homocysteine hydrolase of Methanocaldococcus jannaschii (strain ATCC 43067 / DSM 2661 / JAL-1 / JCM 10045 / NBRC 100440) (Methanococcus jannaschii).